The sequence spans 202 residues: MGRGEFLAMKTEENAANLINSDMNEFVAAAKKLVKDVGMLGGVGFGTSVLQWAASIFAIYLLILDRTNWKTKMLTTLLVPYIFFTLPSVIFQFFSGDFGKWIALIAIIVRLFFPKEFPEWLEIPVALILIVVVSPSLIAWTLRESWVGAVICLVIACYLFHEHIKASGGFKNSFTQKNGISNTIGIVALLVYPVWTIFFHIF.

At 1-42 the chain is on the extracellular side; that stretch reads MGRGEFLAMKTEENAANLINSDMNEFVAAAKKLVKDVGMLGG. Residues 43-63 traverse the membrane as a helical segment; sequence VGFGTSVLQWAASIFAIYLLI. Over 64-72 the chain is Cytoplasmic; sequence LDRTNWKTK. The helical transmembrane segment at 73–93 threads the bilayer; that stretch reads MLTTLLVPYIFFTLPSVIFQF. Over 94 to 97 the chain is Extracellular; sequence FSGD. The chain crosses the membrane as a helical span at residues 98–118; that stretch reads FGKWIALIAIIVRLFFPKEFP. Position 119 (E119) is a topological domain, cytoplasmic. The chain crosses the membrane as a helical span at residues 120–140; that stretch reads WLEIPVALILIVVVSPSLIAW. Over 141-145 the chain is Extracellular; it reads TLRES. Residues 146–166 traverse the membrane as a helical segment; sequence WVGAVICLVIACYLFHEHIKA. Residues 167–181 lie on the Cytoplasmic side of the membrane; that stretch reads SGGFKNSFTQKNGIS. Residues 182–202 form a helical membrane-spanning segment; that stretch reads NTIGIVALLVYPVWTIFFHIF.

Belongs to the Cold-regulated 413 protein family.

It localises to the cell membrane. The sequence is that of Cold-regulated 413 plasma membrane protein 4 from Arabidopsis thaliana (Mouse-ear cress).